Consider the following 317-residue polypeptide: Putative toluene-4-sulfonate monooxygenase system reductase subunit TsaB2 (317 aa).

Positions 4–106 (DVPVTVAAVR…SAPRNLFEMA (103 aa)) constitute an FAD-binding FR-type domain. NAD(+) is bound at residue 110–220 (RRVLLLAGGI…PGSVRMERFK (111 aa)). Residues 232–317 (FELVLQRAGL…CGGGRLVLDI (86 aa)) enclose the 2Fe-2S ferredoxin-type domain. Positions 266, 271, and 274 each coordinate [2Fe-2S] cluster.

Monomer. Part of the p-toluenesulfonate methyl-monooxygenase complex TsaBM, comprising the reductase TsaB and the oxygenase TsaM. FMN serves as cofactor.

Its function is as follows. Involved in the toluene-4-sulfonate degradation pathway. The chain is Putative toluene-4-sulfonate monooxygenase system reductase subunit TsaB2 (tsaB2) from Comamonas testosteroni (Pseudomonas testosteroni).